A 211-amino-acid chain; its full sequence is Pyridoxine/pyridoxamine 5'-phosphate oxidase (211 aa).

Residues 7–10 (RREY) and Lys-65 contribute to the substrate site. Residues 60–65 (RIVLLK), 75–76 (YT), Arg-81, Lys-82, and Gln-104 contribute to the FMN site. Residues Tyr-122, Arg-126, and Ser-130 each contribute to the substrate site. FMN contacts are provided by residues 139–140 (QS) and Trp-184. Residue 190 to 192 (RLH) participates in substrate binding. FMN is bound at residue Arg-194.

Belongs to the pyridoxamine 5'-phosphate oxidase family. As to quaternary structure, homodimer. It depends on FMN as a cofactor.

The catalysed reaction is pyridoxamine 5'-phosphate + O2 + H2O = pyridoxal 5'-phosphate + H2O2 + NH4(+). It carries out the reaction pyridoxine 5'-phosphate + O2 = pyridoxal 5'-phosphate + H2O2. The protein operates within cofactor metabolism; pyridoxal 5'-phosphate salvage; pyridoxal 5'-phosphate from pyridoxamine 5'-phosphate: step 1/1. Its pathway is cofactor metabolism; pyridoxal 5'-phosphate salvage; pyridoxal 5'-phosphate from pyridoxine 5'-phosphate: step 1/1. Catalyzes the oxidation of either pyridoxine 5'-phosphate (PNP) or pyridoxamine 5'-phosphate (PMP) into pyridoxal 5'-phosphate (PLP). The sequence is that of Pyridoxine/pyridoxamine 5'-phosphate oxidase from Vibrio cholerae serotype O1 (strain ATCC 39541 / Classical Ogawa 395 / O395).